The following is a 437-amino-acid chain: Adenylosuccinate synthetase (437 aa).

Residues 25–31 (GDEGKGK), 53–55 (GHT), and Lys-62 contribute to the GTP site. Asp-26 functions as the Proton acceptor in the catalytic mechanism. Mg(2+) is bound by residues Asp-26 and Gly-53. Residues 26–29 (DEGK) and 51–54 (NAGH) contribute to the IMP site. His-54 serves as the catalytic Proton donor. Thr-141, Arg-155, Asn-232, and Thr-247 together coordinate IMP. Residue Thr-307 coordinates GTP. 307-313 (TTTKRPR) provides a ligand contact to substrate. Position 311 (Arg-311) interacts with IMP. GTP-binding positions include Arg-313, 339 to 341 (KLD), and 425 to 427 (GVG).

Belongs to the adenylosuccinate synthetase family. As to quaternary structure, homodimer. Requires Mg(2+) as cofactor.

It localises to the cytoplasm. It catalyses the reaction IMP + L-aspartate + GTP = N(6)-(1,2-dicarboxyethyl)-AMP + GDP + phosphate + 2 H(+). It participates in purine metabolism; AMP biosynthesis via de novo pathway; AMP from IMP: step 1/2. Functionally, plays an important role in the salvage pathway for purine nucleotide biosynthesis. Catalyzes the first committed step in the biosynthesis of AMP from IMP. The protein is Adenylosuccinate synthetase of Plasmodium knowlesi (strain H).